Consider the following 236-residue polypeptide: 2-C-methyl-D-erythritol 4-phosphate cytidylyltransferase (236 aa).

The protein belongs to the IspD/TarI cytidylyltransferase family. IspD subfamily. Homodimer.

The catalysed reaction is 2-C-methyl-D-erythritol 4-phosphate + CTP + H(+) = 4-CDP-2-C-methyl-D-erythritol + diphosphate. The protein operates within isoprenoid biosynthesis; isopentenyl diphosphate biosynthesis via DXP pathway; isopentenyl diphosphate from 1-deoxy-D-xylulose 5-phosphate: step 2/6. Functionally, catalyzes the formation of 4-diphosphocytidyl-2-C-methyl-D-erythritol from CTP and 2-C-methyl-D-erythritol 4-phosphate (MEP). The chain is 2-C-methyl-D-erythritol 4-phosphate cytidylyltransferase from Salmonella newport (strain SL254).